Here is a 72-residue protein sequence, read N- to C-terminus: Translation initiation factor IF-1 2 (72 aa).

Residues 1 to 72 form the S1-like domain; that stretch reads MSKDDVIEVE…TRGRIVYRYK (72 aa).

The protein belongs to the IF-1 family. Component of the 30S ribosomal translation pre-initiation complex which assembles on the 30S ribosome in the order IF-2 and IF-3, IF-1 and N-formylmethionyl-tRNA(fMet); mRNA recruitment can occur at any time during PIC assembly.

It is found in the cytoplasm. One of the essential components for the initiation of protein synthesis. Stabilizes the binding of IF-2 and IF-3 on the 30S subunit to which N-formylmethionyl-tRNA(fMet) subsequently binds. Helps modulate mRNA selection, yielding the 30S pre-initiation complex (PIC). Upon addition of the 50S ribosomal subunit IF-1, IF-2 and IF-3 are released leaving the mature 70S translation initiation complex. This Symbiobacterium thermophilum (strain DSM 24528 / JCM 14929 / IAM 14863 / T) protein is Translation initiation factor IF-1 2.